We begin with the raw amino-acid sequence, 61 residues long: uncharacterized protein (61 aa).

This is an uncharacterized protein from Acidianus convivator (ABV).